The chain runs to 326 residues: Transformer-2 protein homolog (326 aa).

Disordered regions lie at residues 1-114 (MEVA…PSNV) and 179-326 (LHGK…SYRR). The segment covering 38 to 55 (RDSRERSPPRGNSRERSP) has biased composition (basic and acidic residues). Over residues 56 to 85 (PRGGSPNRGGSPNRGGSPNRGGSPNRGGSP) the composition is skewed to low complexity. Residues 104–113 (RLANTASPSN) show a composition bias toward polar residues. One can recognise an RRM domain in the interval 113–191 (NVLGVFGLAP…KSIRTDFSAT (79 aa)). Over residues 220–239 (YGGGDRYGRGDYGGRGGGGD) the composition is skewed to gly residues. A compositionally biased stretch (basic and acidic residues) spans 240–326 (RYGRDDRGGD…DERPRDSYRR (87 aa)).

This sequence belongs to the splicing factor SR family.

The protein resides in the nucleus. Its function is as follows. Sequence-specific RNA-binding protein which participates in the control of pre-mRNA splicing. The polypeptide is Transformer-2 protein homolog (tra2) (Dictyostelium discoideum (Social amoeba)).